We begin with the raw amino-acid sequence, 204 residues long: MGSVQLSGSGLVASLPPNHSFSHKTKLNKPNSYFFRSKHNAARTKTVRAISTAPASQPPAADEPDEPPAVDFAFVHSVLLPDGTPDVHWRRANGGQKLRDIMLDSNIELYGPYSKPLSNCAGVGTCATCMVEIVNGKELLNPRTDIEKEKLKRKPKNWRLACQTNVGNPDSTGLVVIQQLPEWKAHEWNIPKNIPNDDDLETST.

Disordered stretches follow at residues 1 to 24 (MGSVQLSGSGLVASLPPNHSFSHK) and 45 to 68 (KTVRAISTAPASQPPAADEPDEPP). Residues 1–48 (MGSVQLSGSGLVASLPPNHSFSHKTKLNKPNSYFFRSKHNAARTKTVR) constitute a chloroplast transit peptide. In terms of domain architecture, 2Fe-2S ferredoxin-type spans 76–180 (HSVLLPDGTP…STGLVVIQQL (105 aa)). 4 residues coordinate [2Fe-2S] cluster: C120, C126, C129, and C162.

Part of the chloroplast NDH complex, composed of a mixture of chloroplast and nucleus encoded subunits. Component of the NDH subcomplex B, at least composed of PnsB1, PnsB2, PnsB3, PnsB4 and PnsB5.

It is found in the plastid. It localises to the chloroplast thylakoid membrane. In terms of biological role, NDH shuttles electrons from NAD(P)H:plastoquinone, via FMN and iron-sulfur (Fe-S) centers, to quinones in the photosynthetic chain and possibly in a chloroplast respiratory chain. The immediate electron acceptor for the enzyme in this species is believed to be plastoquinone. Couples the redox reaction to proton translocation, and thus conserves the redox energy in a proton gradient. The polypeptide is Photosynthetic NDH subunit of subcomplex B 3, chloroplastic (Arabidopsis thaliana (Mouse-ear cress)).